We begin with the raw amino-acid sequence, 330 residues long: tRNA U34 carboxymethyltransferase (330 aa).

Residues Lys-91, Trp-105, Lys-110, Gly-130, 152–154 (DPS), 181–182 (IE), Met-196, Tyr-200, and Arg-315 contribute to the carboxy-S-adenosyl-L-methionine site.

It belongs to the class I-like SAM-binding methyltransferase superfamily. CmoB family. In terms of assembly, homotetramer.

It carries out the reaction carboxy-S-adenosyl-L-methionine + 5-hydroxyuridine(34) in tRNA = 5-carboxymethoxyuridine(34) in tRNA + S-adenosyl-L-homocysteine + H(+). In terms of biological role, catalyzes carboxymethyl transfer from carboxy-S-adenosyl-L-methionine (Cx-SAM) to 5-hydroxyuridine (ho5U) to form 5-carboxymethoxyuridine (cmo5U) at position 34 in tRNAs. This chain is tRNA U34 carboxymethyltransferase, found in Shewanella loihica (strain ATCC BAA-1088 / PV-4).